The primary structure comprises 375 residues: Hemolysin BL-binding component (375 aa).

An N-terminal signal peptide occupies residues methionine 1–alanine 31. A helical membrane pass occupies residues phenylalanine 232 to valine 252.

In terms of assembly, composed of a binding component, B, and two lytic components, L1 and L2. All three subunits act synergically to cause hemolysis.

The protein localises to the secreted. Its subcellular location is the host cell membrane. Its function is as follows. Cytotoxic protein, part of the enterotoxin complex. Responsible for binding to erythrocytes. This enterotoxin is thought to be the cause of the diarrheal form of gastroenteritis caused by food-borne strains of B.cereus. The protein is Hemolysin BL-binding component (hblA) of Bacillus cereus.